A 686-amino-acid polypeptide reads, in one-letter code: Secretin GspD 2 (686 aa).

An N-terminal signal peptide occupies residues 1-40 (MFWRDITLSVWRKKTTGLKTKKRLLPLVLAAALCSSPVWA). The interval 41-140 (EEATFTANFK…VGEGSDNYAG (100 aa)) is N0, contacts GspC2. The segment at 142 to 206 (EMVTKVVPVR…EVIQRVDHAG (65 aa)) is N1. The segment at 207–279 (NRTEEVIPLD…LIRRLDSEME (73 aa)) is N2. The segment at 282-357 (GNSQVFYLKY…SLQSVIEQLD (76 aa)) is N3. Residues 360–627 (RAQVHVEALI…VFIRPTILRD (268 aa)) form a secretin region. Residues 414-433 (PQKGSTVISENGATTINPDT) form a cap gate region. The s domain, contacts AspS2 stretch occupies residues 629–686 (MAADGVSQRKYNYMRAEQIYRDEQGLSLMPHTAQPVLPAQNQALPPEVRAFLNAGRTR).

This sequence belongs to the bacterial secretin family. GSP D subfamily. As to quaternary structure, forms a cylindrical channel with 15 subunits, each of which interacts with the surrounding pilotin AspS2 proteins (also called GspS-beta). Interacts with inner cell membrane protein GspC2 in the periplasm. Forms multimers in the outer membrane. The isolated N0 domain forms dimers that self-assemble into rings.

The protein resides in the cell outer membrane. Part of a type II secretion system (T2SS, formerly general secretion pathway, GSP) for the export of folded proteins across the outer membrane. This subunit forms the outer membrane channel. This is Secretin GspD 2 (gspD2) from Escherichia coli O78:H11 (strain H10407 / ETEC).